We begin with the raw amino-acid sequence, 262 residues long: DNA-directed RNA polymerase subunit Rpo3 (262 aa).

This sequence belongs to the archaeal Rpo3/eukaryotic RPB3 RNA polymerase subunit family. As to quaternary structure, part of the RNA polymerase complex.

It localises to the cytoplasm. The enzyme catalyses RNA(n) + a ribonucleoside 5'-triphosphate = RNA(n+1) + diphosphate. In terms of biological role, DNA-dependent RNA polymerase (RNAP) catalyzes the transcription of DNA into RNA using the four ribonucleoside triphosphates as substrates. The polypeptide is DNA-directed RNA polymerase subunit Rpo3 (Pyrobaculum neutrophilum (strain DSM 2338 / JCM 9278 / NBRC 100436 / V24Sta) (Thermoproteus neutrophilus)).